The primary structure comprises 313 residues: Olfactory receptor 2B6 (313 aa).

At 1 to 25 the chain is on the extracellular side; sequence MNWVNDSIIQEFILLGFSDRPWLEF. N5 is a glycosylation site (N-linked (GlcNAc...) asparagine). A helical membrane pass occupies residues 26 to 49; that stretch reads PLLVVFLISYTVTIFGNLTIILVS. Residues 50–57 lie on the Cytoplasmic side of the membrane; the sequence is RLDTKLHT. A helical membrane pass occupies residues 58–79; sequence PMYFFLTNLSLLDLCYTTCTVP. Residues 80 to 100 are Extracellular-facing; sequence QMLVNLCSIRKVISYRGCVAQ. C97 and C189 are oxidised to a cystine. Residues 101–120 form a helical membrane-spanning segment; it reads LFIFLALGATEYLLLAVMSF. Residues 121 to 139 lie on the Cytoplasmic side of the membrane; that stretch reads DRFVAICRPLHYSVIMHQR. Residues 140–158 traverse the membrane as a helical segment; that stretch reads LCLQLAAASWVTGFSNSVW. At 159-195 the chain is on the extracellular side; it reads LSTLTLQLPLCDPYVIDHFLCEVPALLKLSCVETTAN. A helical membrane pass occupies residues 196–219; the sequence is EAELFLVSELFHLIPLTLILISYA. The Cytoplasmic portion of the chain corresponds to 220–236; that stretch reads FIVRAVLRIQSAEGRQK. A helical transmembrane segment spans residues 237 to 259; it reads AFGTCGSHLIVVSLFYSTAVSVY. Residues 260 to 272 lie on the Extracellular side of the membrane; that stretch reads LQPPSPSSKDQGK. Residues 273–292 form a helical membrane-spanning segment; sequence MVSLFYGIIAPMLNPLIYTL. Residues 293-313 lie on the Cytoplasmic side of the membrane; the sequence is RNKEVKEGFKRLVARVFLIKK.

This sequence belongs to the G-protein coupled receptor 1 family.

It localises to the cell membrane. Functionally, odorant receptor. This Homo sapiens (Human) protein is Olfactory receptor 2B6.